The following is a 426-amino-acid chain: GTPase Obg (426 aa).

Positions 1–158 (MFVDQVSVYV…RNIKVELKLI (158 aa)) constitute an Obg domain. 2 disordered regions span residues 66–86 (GKRGENGMSKTQHGRNADPLV) and 119–146 (GGRGGRGNTRFATPRNPAPDMAENGEPG). In terms of domain architecture, OBG-type G spans 159–329 (ADVGLVGFPS…LLFAIADKLE (171 aa)). Residues 165-172 (GFPSVGKS), 190-194 (FTTLS), 212-215 (DLPG), 282-285 (NKMD), and 310-312 (SAL) contribute to the GTP site. Residues Ser172 and Thr192 each coordinate Mg(2+). The OCT domain occupies 348-426 (RYQKEEDPFH…LLEYEFEFIE (79 aa)).

This sequence belongs to the TRAFAC class OBG-HflX-like GTPase superfamily. OBG GTPase family. In terms of assembly, monomer. Mg(2+) serves as cofactor.

The protein localises to the cytoplasm. In terms of biological role, an essential GTPase which binds GTP, GDP and possibly (p)ppGpp with moderate affinity, with high nucleotide exchange rates and a fairly low GTP hydrolysis rate. Plays a role in control of the cell cycle, stress response, ribosome biogenesis and in those bacteria that undergo differentiation, in morphogenesis control. The sequence is that of GTPase Obg from Oceanobacillus iheyensis (strain DSM 14371 / CIP 107618 / JCM 11309 / KCTC 3954 / HTE831).